The sequence spans 278 residues: Tetraspanin-13 (278 aa).

Over 1 to 25 (MARDKEDQNNENPSIVQNMSFPFNT) the chain is Cytoplasmic. A helical transmembrane segment spans residues 26 to 46 (IFLISSAIFLVTAAFWFVAVM). Topologically, residues 47–62 (TLHYRTDECNRFVTTP) are extracellular. The helical transmembrane segment at 63-83 (GIFISFSLLAMSLTGFYAAYF) threads the bilayer. Topologically, residues 84 to 92 (KSDCLFRIH) are cytoplasmic. Residues 93–113 (FFIFFLWMFVVVSKAIFVIFL) traverse the membrane as a helical segment. The Extracellular segment spans residues 114 to 249 (HKETNPRLFP…DVHNTSFSIT (136 aa)). Residues Asn202, Asn220, and Asn243 are each glycosylated (N-linked (GlcNAc...) asparagine). A helical transmembrane segment spans residues 250-270 (VNIIHIIFSLCIGMTGWFAWL). Topologically, residues 271–278 (RILRESQK) are cytoplasmic.

The protein belongs to the tetraspanin (TM4SF) family.

It is found in the membrane. Functionally, may be involved in the regulation of cell differentiation. In Arabidopsis thaliana (Mouse-ear cress), this protein is Tetraspanin-13 (TET13).